Consider the following 471-residue polypeptide: Glutamate--tRNA ligase (471 aa).

The short motif at 9 to 19 (PSPTGYLHVGG) is the 'HIGH' region element. Positions 98, 100, 125, and 127 each coordinate Zn(2+). The 'KMSKS' region signature appears at 237–241 (KLSKR). An ATP-binding site is contributed by Lys-240.

It belongs to the class-I aminoacyl-tRNA synthetase family. Glutamate--tRNA ligase type 1 subfamily. In terms of assembly, monomer. It depends on Zn(2+) as a cofactor.

The protein localises to the cytoplasm. It catalyses the reaction tRNA(Glu) + L-glutamate + ATP = L-glutamyl-tRNA(Glu) + AMP + diphosphate. Its function is as follows. Catalyzes the attachment of glutamate to tRNA(Glu) in a two-step reaction: glutamate is first activated by ATP to form Glu-AMP and then transferred to the acceptor end of tRNA(Glu). The polypeptide is Glutamate--tRNA ligase (Shigella boydii serotype 18 (strain CDC 3083-94 / BS512)).